Consider the following 293-residue polypeptide: Protein BOBBER 2 (293 aa).

Alanine 2 is modified (N-acetylalanine). Positions 50 to 80 form a coiled coil; that stretch reads EKEIVAAVMAAKQRLREAEKKKLEKESVKSM. Composition is skewed to basic and acidic residues over residues 67–102 and 110–120; these read AEKK…KEES and EIEKPKEEKES. Residues 67–125 form a disordered region; sequence AEKKKLEKESVKSMEVEKPKKDSLKPTELEKPKEESLMATDPMEIEKPKEEKESGPIVP. One can recognise a CS domain in the interval 131 to 220; it reads LDFEKYSWGQ…DQMEWWKYCV (90 aa).

The protein resides in the cytoplasm. Its subcellular location is the cytoplasmic granule. Small heat shock protein required for the establishment of auxin gradients and for patterning of the apical domain of the embryo. Involved in the specification of the cotyledon primordia. Also required for normal inflorescence and floral meristem function, normal developmental patterning and thermotolerance. Acts as a molecular chaperone. The polypeptide is Protein BOBBER 2 (BOB2) (Arabidopsis thaliana (Mouse-ear cress)).